A 303-amino-acid chain; its full sequence is Methionyl-tRNA formyltransferase (303 aa).

(6S)-5,6,7,8-tetrahydrofolate is bound at residue 108-111; that stretch reads SDLP.

The protein belongs to the Fmt family.

The enzyme catalyses L-methionyl-tRNA(fMet) + (6R)-10-formyltetrahydrofolate = N-formyl-L-methionyl-tRNA(fMet) + (6S)-5,6,7,8-tetrahydrofolate + H(+). Functionally, attaches a formyl group to the free amino group of methionyl-tRNA(fMet). The formyl group appears to play a dual role in the initiator identity of N-formylmethionyl-tRNA by promoting its recognition by IF2 and preventing the misappropriation of this tRNA by the elongation apparatus. The polypeptide is Methionyl-tRNA formyltransferase (Rickettsia rickettsii (strain Iowa)).